The following is a 455-amino-acid chain: Venom prothrombin activator trocarin-D (455 aa).

The first 20 residues, 1–20 (MAPQLLLCLILTFLWSLPEA), serve as a signal peptide directing secretion. Positions 21–40 (ESNVFLKSKVANRFLQRTKR) are excised as a propeptide. A Gla domain is found at 41 to 86 (SNSLFEEIRPGNIERECIEEKCSKEEAREVFEDNEKTETFWNVYVD). A 4-carboxyglutamate mark is found at Glu46, Glu47, Glu54, Glu56, Glu59, Glu60, Glu65, Glu66, Glu69, Glu72, and Glu75. A disulfide bridge links Cys57 with Cys62. The 37-residue stretch at 86-122 (DGDQCSSNPCHYRGTCKDGIGSYTCTCLPNYEGKNCE) folds into the EGF-like 1; calcium-binding domain. 11 disulfides stabilise this stretch: Cys90/Cys101, Cys95/Cys110, Cys112/Cys121, Cys129/Cys140, Cys136/Cys149, Cys151/Cys164, Cys172/Cys328, Cys216/Cys221, Cys236/Cys252, Cys376/Cys390, and Cys401/Cys429. Residue Ser92 is glycosylated (O-linked (Hex...) serine). The EGF-like 2 domain occupies 129–164 (CRVDNGNCWHFCKRVQSETQCSCAESYRLGVDGHSC). The propeptide at 182–209 (REASLPDFVQSQKATLLKKSDNPSPDIR) is activation peptide. A Peptidase S1 domain is found at 210 to 453 (IVNGMDCKLG…FIPWIKKIMS (244 aa)). The active-site Charge relay system is His251. N-linked (GlcNAc...) asparagine glycosylation occurs at Asn254. Asp308 (charge relay system) is an active-site residue. Catalysis depends on Ser405, which acts as the Charge relay system.

This sequence belongs to the peptidase S1 family. Snake venom subfamily. As to quaternary structure, heterodimer of a light chain and a heavy chain; disulfide-linked. Gamma-carboxyglutamate residues are formed by vitamin K dependent carboxylation. These residues are essential for the binding of calcium. In terms of processing, the O-linked saccharides at Ser-92 are a mixture of Xyl-Glc, and Glc along with smaller amounts of Xyl-GlcNAc, GlcNAc, Gal, GalNAc, Xyl-Gal, and Xyl-GalNAc, suggesting that the glycosyl transferases responsible for this modification are non-specific. The N-linked carbohydrate at Asn-254 (Asn-45 of the heavy chain) is a sialylated and diantennary oligosaccharide. As to expression, expressed by the venom gland.

It localises to the secreted. It catalyses the reaction Selective cleavage of Arg-|-Thr and then Arg-|-Ile bonds in prothrombin to form thrombin.. Activated by calcium and phospholipids. Snake prothrombin activator that attacks the hemostatic system of prey. This protein is functionally similar to blood coagulation factor Xa. Induces cyanosis and death in mice at 1 mg/kg body weight during blood clotting. This chain is Venom prothrombin activator trocarin-D, found in Tropidechis carinatus (Australian rough-scaled snake).